We begin with the raw amino-acid sequence, 310 residues long: tRNA pseudouridine synthase B (310 aa).

The Nucleophile role is filled by aspartate 47.

It belongs to the pseudouridine synthase TruB family. Type 1 subfamily.

It carries out the reaction uridine(55) in tRNA = pseudouridine(55) in tRNA. In terms of biological role, responsible for synthesis of pseudouridine from uracil-55 in the psi GC loop of transfer RNAs. This chain is tRNA pseudouridine synthase B, found in Psychromonas ingrahamii (strain DSM 17664 / CCUG 51855 / 37).